Consider the following 161-residue polypeptide: GLLPAAAPAVAYSAAPAVSHVSYSSPVVSYGAPLAAPAITSQSSNILRSFGNLGQVSTYSKTIDTPFSSVRKADIRVSNPGVRFAAAAPVAAYAAPIATAAYAAPVAHAAYAAPVAHAAYAAPVAHAAYAAPVARTIGVAYSAAPAVSHVTYTGLGASYGW.

9 consecutive repeat copies span residues 6 to 9 (AAPA), 14 to 17 (AAPA), 35 to 38 (AAPA), 87 to 90 (AAPV), 103 to 106 (AAPV), 112 to 115 (AAPV), 121 to 124 (AAPV), 130 to 133 (AAPV), and 143 to 146 (AAPA).

Component of the cuticle of the pupa of Tenebrio molitor. This is Pupal cuticle protein C1B from Tenebrio molitor (Yellow mealworm beetle).